The following is a 299-amino-acid chain: Sodium/potassium-transporting ATPase subunit beta-2 (299 aa).

Residues 1–36 (MAALTQKKTCSQMMEEWKEFMWNPRTREFMGRTGSS) are Cytoplasmic-facing. A helical; Signal-anchor for type II membrane protein membrane pass occupies residues 37 to 57 (WALILLFYVVFYAFLTAVFSL). Topologically, residues 58-299 (SLWVMLQTID…VIFTMKIDRL (242 aa)) are extracellular. Residues asparagine 101 and asparagine 119 are each glycosylated (N-linked (GlcNAc...) asparagine). Intrachain disulfides connect cysteine 130–cysteine 152 and cysteine 162–cysteine 178. Asparagine 199, asparagine 226, asparagine 247, and asparagine 259 each carry an N-linked (GlcNAc...) asparagine glycan. Cysteine 206 and cysteine 270 are oxidised to a cystine.

Belongs to the X(+)/potassium ATPases subunit beta family. The sodium/potassium-transporting ATPase is composed of a catalytic alpha subunit, an auxiliary non-catalytic beta subunit and an additional regulatory subunit. In terms of tissue distribution, expressed at a high level in bladder epithelial cells and eye and at a trace level in kidney; it is not detectable in significant amounts in the stomach, colon and small intestine.

The protein resides in the cell membrane. Its function is as follows. This is the non-catalytic component of the active enzyme, which catalyzes the hydrolysis of ATP coupled with the exchange of Na(+) and K(+) ions across the plasma membrane. The exact function of this glycoprotein is not known. Some specific sequence of the beta subunit can modulate the activation of the Na,K-pump by extracellular potassium ions. The protein is Sodium/potassium-transporting ATPase subunit beta-2 of Rhinella marina (Cane toad).